A 66-amino-acid polypeptide reads, in one-letter code: U10-theraphotoxin-Cg1a 2 (66 aa).

A signal peptide spans 1 to 21 (MKTSVLFVIFGLALLLCLSFA). Residues 22-29 (AELEDTGR) constitute a propeptide that is removed on maturation. 3 disulfides stabilise this stretch: Cys31–Cys46, Cys38–Cys51, and Cys45–Cys58.

Belongs to the neurotoxin 10 (Hwtx-1) family. 29 (Jztx-13) subfamily. As to expression, expressed by the venom gland.

It localises to the secreted. In terms of biological role, probable ion channel inhibitor. This is U10-theraphotoxin-Cg1a 2 from Chilobrachys guangxiensis (Chinese earth tiger tarantula).